Reading from the N-terminus, the 348-residue chain is MEERMITPQQLPGDQEGEVLRPHRLADYIGQTKVKDNLQIFIQAALARGEALDHVLLYGPPGLGKTTLANIIATEMEVNIRTTSGPAIERPGDLAAILTSLEPRDVLFIDEIHRLSRTTEEILYSAMEDGCLDIVIGKGPSARSIRLTLPPFTLVGATTRAGQLASPLRDRFGVISRLEFYEVEDLIRIITRAAGILNLQITLEGASEIARRSRGTPRVANRLLKRVRDYAQVWEDGRVTQELAGKSLDRLEVDPAGLDRIDQKCLLTIIQMFAGGPVGLETLSATIGEEAETIEDVVEPYLLQQGFIQRTPRGRVATVRAYQHLNIPVNSSHQEGGQGDSLFDAAED.

The interval 1–181 (MEERMITPQQ…FGVISRLEFY (181 aa)) is large ATPase domain (RuvB-L). ATP contacts are provided by L20, R21, G62, K65, T66, T67, R171, Y181, and R218. Position 66 (T66) interacts with Mg(2+). The small ATPAse domain (RuvB-S) stretch occupies residues 182-252 (EVEDLIRIIT…LAGKSLDRLE (71 aa)). The tract at residues 255–348 (PAGLDRIDQK…GDSLFDAAED (94 aa)) is head domain (RuvB-H). Residues R310 and R315 each contribute to the DNA site. The disordered stretch occupies residues 329–348 (VNSSHQEGGQGDSLFDAAED).

This sequence belongs to the RuvB family. In terms of assembly, homohexamer. Forms an RuvA(8)-RuvB(12)-Holliday junction (HJ) complex. HJ DNA is sandwiched between 2 RuvA tetramers; dsDNA enters through RuvA and exits via RuvB. An RuvB hexamer assembles on each DNA strand where it exits the tetramer. Each RuvB hexamer is contacted by two RuvA subunits (via domain III) on 2 adjacent RuvB subunits; this complex drives branch migration. In the full resolvosome a probable DNA-RuvA(4)-RuvB(12)-RuvC(2) complex forms which resolves the HJ.

The protein localises to the cytoplasm. It carries out the reaction ATP + H2O = ADP + phosphate + H(+). In terms of biological role, the RuvA-RuvB-RuvC complex processes Holliday junction (HJ) DNA during genetic recombination and DNA repair, while the RuvA-RuvB complex plays an important role in the rescue of blocked DNA replication forks via replication fork reversal (RFR). RuvA specifically binds to HJ cruciform DNA, conferring on it an open structure. The RuvB hexamer acts as an ATP-dependent pump, pulling dsDNA into and through the RuvAB complex. RuvB forms 2 homohexamers on either side of HJ DNA bound by 1 or 2 RuvA tetramers; 4 subunits per hexamer contact DNA at a time. Coordinated motions by a converter formed by DNA-disengaged RuvB subunits stimulates ATP hydrolysis and nucleotide exchange. Immobilization of the converter enables RuvB to convert the ATP-contained energy into a lever motion, pulling 2 nucleotides of DNA out of the RuvA tetramer per ATP hydrolyzed, thus driving DNA branch migration. The RuvB motors rotate together with the DNA substrate, which together with the progressing nucleotide cycle form the mechanistic basis for DNA recombination by continuous HJ branch migration. Branch migration allows RuvC to scan DNA until it finds its consensus sequence, where it cleaves and resolves cruciform DNA. The polypeptide is Holliday junction branch migration complex subunit RuvB (Desulfitobacterium hafniense (strain DSM 10664 / DCB-2)).